Consider the following 326-residue polypeptide: Target of rapamycin complex subunit LST8 (326 aa).

Position 1 is an N-acetylmethionine (M1). WD repeat units follow at residues 1–37 (MNTTPGTVGSDPVILATAGYDHTVRFWQAHSGICTRT), 40–80 (HQDS…PIIS), 83–122 (GVSKNIASVGFHEDGRWMYTGGEDCTARIWDLRSRNLQCQ), 126–165 (QVNAPINCVCLHPNQAELIVGDQSGAIHIWDLKTDHNEQL), and 168–207 (EPESSITSAHIDPDASYMAAVNSAGNCYVWNLTGGIGDDV). The residue at position 51 (T51) is a Phosphothreonine. K86 is covalently cross-linked (Glycyl lysine isopeptide (Lys-Gly) (interchain with G-Cter in SUMO3)). Residues K215, K245, and K261 each participate in a glycyl lysine isopeptide (Lys-Gly) (interchain with G-Cter in SUMO3) cross-link. Residues 218 to 257 (AHTRYALQCRFSPDSTLLATCSADQTCKIWRTSNFSLMTE) form a WD 6 repeat. A WD 7 repeat occupies 268–309 (SSRGWMWGCAFSGDSQYIVTASSDNLARLWCVETGEIKREYG). A Glycyl lysine isopeptide (Lys-Gly) (interchain with G-Cter in SUMO3); alternate cross-link involves residue K305. Residues K305 and K313 each participate in a glycyl lysine isopeptide (Lys-Gly) (interchain with G-Cter in ubiquitin); alternate cross-link. A Glycyl lysine isopeptide (Lys-Gly) (interchain with G-Cter in SUMO1); alternate cross-link involves residue K313.

The protein belongs to the WD repeat LST8 family. In terms of assembly, part of the mechanistic target of rapamycin complex 1 (mTORC1) which contains MTOR, MLST8 and RPTOR. mTORC1 associates with AKT1S1/PRAS40, which inhibits its activity. mTORC1 binds to and is inhibited by FKBP12-rapamycin. Within mTORC1, interacts directly with MTOR and RPTOR. Component of the mechanistic target of rapamycin complex 2 (mTORC2), consisting in two heterotretramers composed of MTOR, MLST8, RICTOR and MAPKAP1/SIN1. Contrary to mTORC1, mTORC2 does not bind to and is not sensitive to FKBP12-rapamycin. mTORC1 and mTORC2 associate with DEPTOR, which regulates their activity. Interacts with RHEB. Interacts with MEAK7. Interacts with SIK3. Interacts with SLC38A7; this interaction promotes the recruitment of mTORC1 to the lysosome and its subsequent activation. In terms of processing, phosphorylation at Thr-51 by CDK1 promotes ubiquitination by the SCF(FBXW7) complex, followed by degradation. Ubiquitination by the SCF(FBXW7) and SCF(FBXW11) complexes following phosphorylation at Thr-51 by CDK1, leads to its degradation by the proteasome. Ubiquitination at Lys-305 and Lys-313 by TRAF2 via 'Lys-63'-linked polyubiquitin chains inhibits formation of the mTORC2 complex, while promoting formation of the mTORC1 complex: ubiquitination disrupts the interaction between MLST8 and MAPKAP1/SIN1 to favor mTORC1 assembly. Deubiquitination at Lys-305 and Lys-313 by OTUD7B promotes MLST8 interaction with MAPKAP1/SIN1, facilitating mTORC2 assembly. Post-translationally, sumoylation with SUMO1, SUMO2 and SUMO3 promotes assembly of both mTORC1 and mTORC2 complexes.

The protein resides in the lysosome membrane. The protein localises to the cytoplasm. Its function is as follows. Subunit of both mTORC1 and mTORC2, which regulates cell growth and survival in response to nutrient and hormonal signals. mTORC1 is activated in response to growth factors or amino acids. In response to nutrients, mTORC1 is recruited to the lysosome membrane and promotes protein, lipid and nucleotide synthesis by phosphorylating several substrates, such as ribosomal protein S6 kinase (RPS6KB1 and RPS6KB2) and EIF4EBP1 (4E-BP1). In the same time, it inhibits catabolic pathways by phosphorylating the autophagy initiation components ULK1 and ATG13, as well as transcription factor TFEB, a master regulators of lysosomal biogenesis and autophagy. The mTORC1 complex is inhibited in response to starvation and amino acid depletion. Within mTORC1, MLST8 interacts directly with MTOR and enhances its kinase activity. In nutrient-poor conditions, stabilizes the MTOR-RPTOR interaction and favors RPTOR-mediated inhibition of MTOR activity. As part of the mTORC2 complex, transduces signals from growth factors to pathways involved in proliferation, cytoskeletal organization, lipogenesis and anabolic output. mTORC2 is also activated by growth factors, but seems to be nutrient-insensitive. In response to growth factors, mTORC2 phosphorylates and activates AGC protein kinase family members, including AKT (AKT1, AKT2 and AKT3), PKC (PRKCA, PRKCB and PRKCE) and SGK1. mTORC2 functions upstream of Rho GTPases to regulate the actin cytoskeleton, probably by activating one or more Rho-type guanine nucleotide exchange factors. mTORC2 promotes the serum-induced formation of stress-fibers or F-actin. mTORC2 plays a critical role in AKT1 activation by mediating phosphorylation of different sites depending on the context, such as 'Thr-450', 'Ser-473', 'Ser-477' or 'Thr-479', facilitating the phosphorylation of the activation loop of AKT1 on 'Thr-308' by PDPK1/PDK1 which is a prerequisite for full activation. mTORC2 regulates the phosphorylation of SGK1 at 'Ser-422'. mTORC2 also modulates the phosphorylation of PRKCA on 'Ser-657'. Within mTORC2, MLST8 acts as a bridge between MAPKAP1/SIN1 and MTOR. In Mus musculus (Mouse), this protein is Target of rapamycin complex subunit LST8.